Consider the following 216-residue polypeptide: MASKEEIIAKAKDAITDFDEELAAEVAEEALAAGIDPVELIEKGFTAGMQEVGEQFEQGSLFLPHVLAAAEAMNTGMEVIKPEMEKRKSETKSLGTVVIGTIEGDIHSIGKDIVASMLNIAGFKVVDLGRDVPIKTFVEKAKEVKPQIIASSALMTTTMVNQIQIEEQLKEAGIRDQVKTMVGGAPVTQDWADKIGADLYGESATDVVSKVRAVLL.

The B12-binding N-terminal domain maps to 1-92 (MASKEEIIAK…EMEKRKSETK (92 aa)). The 123-residue stretch at 94 to 216 (LGTVVIGTIE…VVSKVRAVLL (123 aa)) folds into the B12-binding domain. A methylcob(III)alamin-binding site is contributed by histidine 107.

This sequence belongs to the methylamine corrinoid protein family. As to quaternary structure, can form a complex with MttB.

It participates in one-carbon metabolism; methanogenesis from trimethylamine. Acts probably as a methyl group carrier between MttB and either MtbA or MtaA. The protein is Trimethylamine corrinoid protein 1 (mttC1) of Methanosarcina acetivorans (strain ATCC 35395 / DSM 2834 / JCM 12185 / C2A).